The sequence spans 339 residues: Photosystem II assembly lipoprotein Ycf48 (339 aa).

An N-terminal signal peptide occupies residues 1–22; that stretch reads MVIVKSWQKIFTLLVVLLLCIG. Residue cysteine 23 is the site of N-palmitoyl cysteine attachment. A lipid anchor (S-diacylglycerol cysteine) is attached at cysteine 23.

The protein belongs to the Ycf48 family. As to quaternary structure, part of early PSII assembly complexes which includes D1 (psbA) and PsbI; not found in mature PSII. Binds to the lumenal side of PSII complexes. Interacts with YidC.

It localises to the cellular thylakoid membrane. A factor required for optimal assembly of photosystem II (PSII), acting in the early stages of PSII assembly. Also plays a role in replacement of photodamaged D1 (psbA). Assists YidC in synthesis of chlorophyll-binding proteins. The sequence is that of Photosystem II assembly lipoprotein Ycf48 from Nostoc sp. (strain PCC 7120 / SAG 25.82 / UTEX 2576).